The sequence spans 514 residues: Glutamate--cysteine ligase (514 aa).

The protein belongs to the glutamate--cysteine ligase type 1 family. Type 1 subfamily.

The enzyme catalyses L-cysteine + L-glutamate + ATP = gamma-L-glutamyl-L-cysteine + ADP + phosphate + H(+). Its pathway is sulfur metabolism; glutathione biosynthesis; glutathione from L-cysteine and L-glutamate: step 1/2. This is Glutamate--cysteine ligase from Enterobacter sp. (strain 638).